A 225-amino-acid chain; its full sequence is Putative tyrosine-protein phosphatase OCA1 (225 aa).

Acidic residues predominate over residues 1–11 (MTDNCREDDDN). The tract at residues 1–24 (MTDNCREDDDNLGTSGDNALSAPT) is disordered. Over residues 12–24 (LGTSGDNALSAPT) the composition is skewed to polar residues. The Tyrosine-protein phosphatase domain maps to 42–196 (NFCPVERYLY…FDTKSVTIDK (155 aa)). Cysteine 138 (phosphocysteine intermediate) is an active-site residue.

It belongs to the protein-tyrosine phosphatase family.

It is found in the cytoplasm. It carries out the reaction O-phospho-L-tyrosyl-[protein] + H2O = L-tyrosyl-[protein] + phosphate. Its function is as follows. Putative tyrosine-protein phosphatase required for protection against superoxide stress. This Eremothecium gossypii (strain ATCC 10895 / CBS 109.51 / FGSC 9923 / NRRL Y-1056) (Yeast) protein is Putative tyrosine-protein phosphatase OCA1 (OCA1).